The chain runs to 232 residues: Ubiquinone biosynthesis O-methyltransferase (232 aa).

The S-adenosyl-L-methionine site is built by R36, G55, D76, and M120.

The protein belongs to the methyltransferase superfamily. UbiG/COQ3 family.

It catalyses the reaction a 3-demethylubiquinol + S-adenosyl-L-methionine = a ubiquinol + S-adenosyl-L-homocysteine + H(+). The catalysed reaction is a 3-(all-trans-polyprenyl)benzene-1,2-diol + S-adenosyl-L-methionine = a 2-methoxy-6-(all-trans-polyprenyl)phenol + S-adenosyl-L-homocysteine + H(+). It participates in cofactor biosynthesis; ubiquinone biosynthesis. Functionally, O-methyltransferase that catalyzes the 2 O-methylation steps in the ubiquinone biosynthetic pathway. In Thiobacillus denitrificans (strain ATCC 25259 / T1), this protein is Ubiquinone biosynthesis O-methyltransferase.